The primary structure comprises 460 residues: Putative glycoside/cation symporter YagG (460 aa).

Residues 1–9 lie on the Cytoplasmic side of the membrane; that stretch reads MTQLTMKDK. Helical transmembrane passes span 10-30 and 31-51; these read IGYGLGDTACGFVWQATMFLL and AYFYTDVFGLSAGIMGTLFLV. At 52-78 the chain is on the cytoplasmic side; that stretch reads SRVLDAVTDPLMGLLVDRTRTRHGQFR. The chain crosses the membrane as a helical span at residues 79-99; it reads PFLLWGAIPFGIVCVLTFYTP. Topologically, residues 100-106 are periplasmic; the sequence is DFSAQGK. Residues 107–127 form a helical membrane-spanning segment; that stretch reads IIYACVTYILLTLVYTFVNVP. At 128-150 the chain is on the cytoplasmic side; sequence YCAMPGVITADPKERHALQSWRF. A helical transmembrane segment spans residues 151–171; it reads FLAAAGSLAISGIALPLVSII. Topologically, residues 172-179 are periplasmic; that stretch reads GKGDEQVG. The chain crosses the membrane as a helical span at residues 180–200; that stretch reads YFGAMCVLGLSGVVLLYVCFF. The Cytoplasmic portion of the chain corresponds to 201–262; it reads TTKERYTFEV…FVKYVMDHPE (62 aa). A helical transmembrane segment spans residues 263–283; sequence LATQFLLYGSLATMFGSLCSS. Topologically, residues 284–308 are periplasmic; sequence RLLGRFDRVTAFKWIIVAYSLISLL. A helical transmembrane segment spans residues 309–329; the sequence is IFVTPAEHIALIFALNILFLF. Residues 330-366 lie on the Cytoplasmic side of the membrane; it reads VFNTTTPLQWLMASDVVDYEESRSGRRLDGLVFSTYL. The chain crosses the membrane as a helical span at residues 367–387; that stretch reads FSLKIGLAIGGAVVGWILAYV. The Periplasmic segment spans residues 388 to 405; the sequence is NYSASSSVQPVEVLTTIK. Residues 406–426 form a helical membrane-spanning segment; the sequence is ILFCVVPVVLYAGMFIMLSLY. Topologically, residues 427 to 460 are cytoplasmic; it reads KLTDARVEAISRQLIKHRAAQGEAVPDAATAASH.

Belongs to the sodium:galactoside symporter (TC 2.A.2) family.

It is found in the cell inner membrane. This Escherichia coli (strain K12) protein is Putative glycoside/cation symporter YagG (yagG).